The sequence spans 113 residues: Putative pterin-4-alpha-carbinolamine dehydratase (113 aa).

The protein belongs to the pterin-4-alpha-carbinolamine dehydratase family.

It catalyses the reaction (4aS,6R)-4a-hydroxy-L-erythro-5,6,7,8-tetrahydrobiopterin = (6R)-L-erythro-6,7-dihydrobiopterin + H2O. The protein is Putative pterin-4-alpha-carbinolamine dehydratase of Nitrosomonas europaea (strain ATCC 19718 / CIP 103999 / KCTC 2705 / NBRC 14298).